The primary structure comprises 345 residues: Phosphoribosylformylglycinamidine cyclo-ligase (345 aa).

Belongs to the AIR synthase family.

Its subcellular location is the cytoplasm. The catalysed reaction is 2-formamido-N(1)-(5-O-phospho-beta-D-ribosyl)acetamidine + ATP = 5-amino-1-(5-phospho-beta-D-ribosyl)imidazole + ADP + phosphate + H(+). Its pathway is purine metabolism; IMP biosynthesis via de novo pathway; 5-amino-1-(5-phospho-D-ribosyl)imidazole from N(2)-formyl-N(1)-(5-phospho-D-ribosyl)glycinamide: step 2/2. This chain is Phosphoribosylformylglycinamidine cyclo-ligase, found in Shewanella oneidensis (strain ATCC 700550 / JCM 31522 / CIP 106686 / LMG 19005 / NCIMB 14063 / MR-1).